The primary structure comprises 1288 residues: CLIP-associating protein 2 (1288 aa).

A disordered region spans residues 1-62 (MALSLSQDRS…AAKSGASKEG (62 aa)). Low complexity-rich tracts occupy residues 19–32 (GSRP…FKVP) and 40–62 (ESAS…SKEG). Residues 62 to 312 (GAGAVDEEDF…RTLQSCLKSS (251 aa)) are TOG 1. HEAT repeat units lie at residues 174-209 (HGAE…IRHT), 210-246 (HVPR…EWQT), and 251-288 (RHAA…HFPG). Disordered stretches follow at residues 314 to 571 (SVAS…SSRL) and 614 to 634 (ANSD…NGSI). 2 stretches are compositionally biased toward low complexity: residues 317–337 (SLPQ…RPLS) and 347–358 (PAGSKSSGSPAS). Polar residues-rich tracts occupy residues 406 to 421 (KQTL…SQVD) and 468 to 478 (TALSTLSTGAQ). Positions 490 to 493 (SRIP) match the SXIP motif 1 motif. Residues 496–518 (QGCSRDSSPTRLSVAPSNISHIY) are compositionally biased toward polar residues. The SXIP motif 2 motif lies at 527-530 (SRIP). The segment covering 616–630 (SDASSACSERSYSSR) has biased composition (low complexity). Residues 638–889 (MRQTEDVAEV…TKLLQNHLRN (252 aa)) are TOG 2. 2 HEAT repeats span residues 718–755 (RVFS…KMGA) and 780–817 (LQFT…QMEP). Residues 891-900 (GNTAQASIGS) are compositionally biased toward polar residues. Disordered regions lie at residues 891–936 (GNTA…FDYD) and 960–1047 (SVRS…DSGV). Over residues 912-931 (SWSSPLTSPTNTSQNTPSPS) the composition is skewed to low complexity. Residues 963-977 (SQEDMTEPPRKREGD) are compositionally biased toward basic and acidic residues. Positions 1019–1030 (SDSSFGSSSFNK) are enriched in low complexity. A compositionally biased stretch (acidic residues) spans 1036–1046 (DQEESLTDDSG). 4 HEAT repeats span residues 1047-1086 (VDQS…ETQL), 1091-1128 (EHFK…RQPW), 1167-1204 (ISPD…RLPK), and 1209-1246 (QMLP…VIGE).

It belongs to the CLASP family. As to quaternary structure, interacts with microtubules.

It is found in the cytoplasm. The protein localises to the cytoskeleton. Its subcellular location is the microtubule organizing center. The protein resides in the centrosome. It localises to the chromosome. It is found in the centromere. The protein localises to the kinetochore. Its subcellular location is the spindle. The protein resides in the golgi apparatus. It localises to the trans-Golgi network. It is found in the cell membrane. The protein localises to the cell projection. Its subcellular location is the ruffle membrane. Its function is as follows. Microtubule plus-end tracking protein that promotes the stabilization of dynamic microtubules. Involved in the nucleation of noncentrosomal microtubules originating from the trans-Golgi network (TGN). Required for the polarization of the cytoplasmic microtubule arrays in migrating cells towards the leading edge of the cell. May act at the cell cortex to enhance the frequency of rescue of depolymerizing microtubules. This cortical microtubule stabilizing activity is regulated at least in part by phosphatidylinositol 3-kinase signaling. Also performs a similar stabilizing function at the kinetochore which is essential for the bipolar alignment of chromosomes on the mitotic spindle. The chain is CLIP-associating protein 2 (clasp2) from Danio rerio (Zebrafish).